The chain runs to 516 residues: Endoglucanase 17 (516 aa).

The signal sequence occupies residues M1–G29. D105 (nucleophile) is an active-site residue. Residues H433, D484, and E493 contribute to the active site.

This sequence belongs to the glycosyl hydrolase 9 (cellulase E) family.

It is found in the secreted. The catalysed reaction is Endohydrolysis of (1-&gt;4)-beta-D-glucosidic linkages in cellulose, lichenin and cereal beta-D-glucans.. The polypeptide is Endoglucanase 17 (Arabidopsis thaliana (Mouse-ear cress)).